The following is a 500-amino-acid chain: ATP synthase subunit beta (500 aa).

ATP is bound at residue 157 to 164 (GGAGVGKT).

The protein belongs to the ATPase alpha/beta chains family. As to quaternary structure, F-type ATPases have 2 components, CF(1) - the catalytic core - and CF(0) - the membrane proton channel. CF(1) has five subunits: alpha(3), beta(3), gamma(1), delta(1), epsilon(1). CF(0) has three main subunits: a(1), b(2) and c(9-12). The alpha and beta chains form an alternating ring which encloses part of the gamma chain. CF(1) is attached to CF(0) by a central stalk formed by the gamma and epsilon chains, while a peripheral stalk is formed by the delta and b chains.

It is found in the cell inner membrane. The enzyme catalyses ATP + H2O + 4 H(+)(in) = ADP + phosphate + 5 H(+)(out). Functionally, produces ATP from ADP in the presence of a proton gradient across the membrane. The catalytic sites are hosted primarily by the beta subunits. This is ATP synthase subunit beta from Salinibacter ruber (strain DSM 13855 / M31).